A 116-amino-acid polypeptide reads, in one-letter code: ATP synthase lipid-binding protein, mitochondrial (116 aa).

Residues 1 to 24 constitute a mitochondrion transit peptide; that stretch reads MYCQRLALPLTRSLLASRAPLALR. Residues 57–77 traverse the membrane as a helical segment; that stretch reads VGVAGSGAGIGNVFGALVIGY. Lysine 84 is modified (N6,N6,N6-trimethyllysine). Residues 92 to 112 traverse the membrane as a helical segment; it reads ILGFALSEAMGLFCLTMGFMI.

This sequence belongs to the ATPase C chain family. F-type ATPases have 2 components, CF(1) - the catalytic core - and CF(0) - the membrane proton channel. CF(1) has five subunits: alpha(3), beta(3), gamma(1), delta(1), epsilon(1). CF(0) has three main subunits: a, b and c. Post-translationally, trimethylated by ATPSCKMT at Lys-84. Methylation may be required for proper incorporation of the C subunit into the ATP synthase complex and mitochondrial respiration.

It localises to the mitochondrion membrane. Mitochondrial membrane ATP synthase (F(1)F(0) ATP synthase or Complex V) produces ATP from ADP in the presence of a proton gradient across the membrane which is generated by electron transport complexes of the respiratory chain. F-type ATPases consist of two structural domains, F(1) - containing the extramembraneous catalytic core and F(0) - containing the membrane proton channel, linked together by a central stalk and a peripheral stalk. During catalysis, ATP synthesis in the catalytic domain of F(1) is coupled via a rotary mechanism of the central stalk subunits to proton translocation. Part of the complex F(0) domain. A homomeric c-ring of probably 10 subunits is part of the complex rotary element. The sequence is that of ATP synthase lipid-binding protein, mitochondrial from Caenorhabditis briggsae.